The primary structure comprises 144 residues: Large ribosomal subunit protein uL13 (144 aa).

It belongs to the universal ribosomal protein uL13 family. As to quaternary structure, part of the 50S ribosomal subunit.

In terms of biological role, this protein is one of the early assembly proteins of the 50S ribosomal subunit, although it is not seen to bind rRNA by itself. It is important during the early stages of 50S assembly. This chain is Large ribosomal subunit protein uL13, found in Mesomycoplasma hyopneumoniae (strain 232) (Mycoplasma hyopneumoniae).